Reading from the N-terminus, the 67-residue chain is DNA-directed RNA polymerase subunit omega (67 aa).

The protein belongs to the RNA polymerase subunit omega family. The RNAP catalytic core consists of 2 alpha, 1 beta, 1 beta' and 1 omega subunit. When a sigma factor is associated with the core the holoenzyme is formed, which can initiate transcription.

The enzyme catalyses RNA(n) + a ribonucleoside 5'-triphosphate = RNA(n+1) + diphosphate. Its function is as follows. Promotes RNA polymerase assembly. Latches the N- and C-terminal regions of the beta' subunit thereby facilitating its interaction with the beta and alpha subunits. The polypeptide is DNA-directed RNA polymerase subunit omega (Paraburkholderia phymatum (strain DSM 17167 / CIP 108236 / LMG 21445 / STM815) (Burkholderia phymatum)).